Reading from the N-terminus, the 128-residue chain is Small ribosomal subunit protein uS13 (128 aa).

The tract at residues 85–128 (GSYRGLRHRRSLPVRGQRTHTNARTRKGPRRGTVANKKKATGKT) is disordered. Residues 89-128 (GLRHRRSLPVRGQRTHTNARTRKGPRRGTVANKKKATGKT) are compositionally biased toward basic residues.

Belongs to the universal ribosomal protein uS13 family. As to quaternary structure, part of the 30S ribosomal subunit. Forms a loose heterodimer with protein S19. Forms two bridges to the 50S subunit in the 70S ribosome.

In terms of biological role, located at the top of the head of the 30S subunit, it contacts several helices of the 16S rRNA. In the 70S ribosome it contacts the 23S rRNA (bridge B1a) and protein L5 of the 50S subunit (bridge B1b), connecting the 2 subunits; these bridges are implicated in subunit movement. Contacts the tRNAs in the A and P-sites. The chain is Small ribosomal subunit protein uS13 from Solibacter usitatus (strain Ellin6076).